A 452-amino-acid chain; its full sequence is Keratin, type I cytoskeletal 42 (452 aa).

Residues 4–93 form a head region; the sequence is TTSIRQFSTS…GVSDALLGGS (90 aa). 2 coiled-coil regions span residues 93 to 132 and 188 to 407; these read SEKE…WYKK and NLRM…HLAT. The coil 1A stretch occupies residues 94–129; sequence EKETMQNLNDRLATYLDRVRALEEANTDLEVKIREW. The IF rod domain maps to 94–405; that stretch reads EKETMQNLND…RLLEGEDAHL (312 aa). The linker 1 stretch occupies residues 130-147; it reads YKKQGPGPARDYSPYFKT. Residues 148 to 239 are coil 1B; sequence IEDLRNKILA…KNHEEEMNAL (92 aa). The linker 12 stretch occupies residues 240-262; the sequence is RGQVGGDVNVEMDAAPGVDLSRI. A coil 2 region spans residues 263-401; it reads LNEMRDQYEK…ATYRRLLEGE (139 aa). Residues 402–452 are tail; it reads DAHLATQYSSSLASQASREGTVTSRQVRTIVEEVQDGKVVSSREQVHRSTH.

It belongs to the intermediate filament family. As to quaternary structure, heterodimer of a type I and a type II keratin. Colocalizes with KRT8/KRT18 filament network.

The protein resides in the cytoplasm. The polypeptide is Keratin, type I cytoskeletal 42 (Rattus norvegicus (Rat)).